The chain runs to 335 residues: DNA-directed RNA polymerase subunit alpha (335 aa).

Residues 1–248 (MTIQTSRTLS…GLFAPLQEVS (248 aa)) are alpha N-terminal domain (alpha-NTD). Residues 256–335 (KPDEDNQKNQ…LPRTREKGKA (80 aa)) form an alpha C-terminal domain (alpha-CTD) region.

Belongs to the RNA polymerase alpha chain family. In terms of assembly, in cyanobacteria the RNAP catalytic core is composed of 2 alpha, 1 beta, 1 beta', 1 gamma and 1 omega subunit. When a sigma factor is associated with the core the holoenzyme is formed, which can initiate transcription.

The enzyme catalyses RNA(n) + a ribonucleoside 5'-triphosphate = RNA(n+1) + diphosphate. Its function is as follows. DNA-dependent RNA polymerase catalyzes the transcription of DNA into RNA using the four ribonucleoside triphosphates as substrates. The sequence is that of DNA-directed RNA polymerase subunit alpha from Synechococcus sp. (strain JA-2-3B'a(2-13)) (Cyanobacteria bacterium Yellowstone B-Prime).